The sequence spans 1040 residues: Multidrug resistance protein MdtB (1040 aa).

12 helical membrane passes run 16–36, 347–367, 369–389, 396–416, 440–460, 472–492, 537–557, 863–883, 888–908, 911–931, 968–988, and 998–1018; these read FIMR…AGII, LMMA…NIPA, IIPG…MVFL, LTLM…IVVI, IGFT…PLLF, FAIT…TLTP, WLTL…WVFI, LGST…VLGI, FIHP…ALLA, IAGS…IGIV, ILMT…STGV, and IGMV…TPVI.

Belongs to the resistance-nodulation-cell division (RND) (TC 2.A.6) family. MdtB subfamily. In terms of assembly, part of a tripartite efflux system composed of MdtA, MdtB and MdtC. MdtB forms a heteromultimer with MdtC.

The protein resides in the cell inner membrane. Its function is as follows. The MdtABC tripartite complex confers resistance against novobiocin and deoxycholate. This chain is Multidrug resistance protein MdtB, found in Escherichia coli (strain SE11).